Here is a 263-residue protein sequence, read N- to C-terminus: Malonyl-[acyl-carrier protein] O-methyltransferase (263 aa).

It belongs to the methyltransferase superfamily.

It carries out the reaction malonyl-[ACP] + S-adenosyl-L-methionine = malonyl-[ACP] methyl ester + S-adenosyl-L-homocysteine. It participates in cofactor biosynthesis; biotin biosynthesis. Functionally, converts the free carboxyl group of a malonyl-thioester to its methyl ester by transfer of a methyl group from S-adenosyl-L-methionine (SAM). It allows to synthesize pimeloyl-ACP via the fatty acid synthetic pathway. The chain is Malonyl-[acyl-carrier protein] O-methyltransferase from Chlorobium luteolum (strain DSM 273 / BCRC 81028 / 2530) (Pelodictyon luteolum).